The following is a 434-amino-acid chain: Histidinol dehydrogenase (434 aa).

The NAD(+) site is built by Tyr-130, Gln-191, and Asn-214. Substrate-binding residues include Ser-237, Gln-259, and His-262. The Zn(2+) site is built by Gln-259 and His-262. Catalysis depends on proton acceptor residues Glu-327 and His-328. Residues His-328, Asp-361, Glu-415, and His-420 each contribute to the substrate site. Asp-361 contributes to the Zn(2+) binding site. A Zn(2+)-binding site is contributed by His-420.

This sequence belongs to the histidinol dehydrogenase family. Requires Zn(2+) as cofactor.

The catalysed reaction is L-histidinol + 2 NAD(+) + H2O = L-histidine + 2 NADH + 3 H(+). It functions in the pathway amino-acid biosynthesis; L-histidine biosynthesis; L-histidine from 5-phospho-alpha-D-ribose 1-diphosphate: step 9/9. Catalyzes the sequential NAD-dependent oxidations of L-histidinol to L-histidinaldehyde and then to L-histidine. The chain is Histidinol dehydrogenase from Rhizobium meliloti (strain 1021) (Ensifer meliloti).